Here is a 615-residue protein sequence, read N- to C-terminus: MPIQVLPPQLANQIAAGEVVERPASVVKELVENSLDAGATRIDIDIERGGAKLIRIRDNGCGIKKDELALALARHATSKIASLDDLEAIISLGFRGEALASISSVSRLTLTSRTAEQQEAWQAYAEGRDMDVTVKPAAHPVGTTLEVLDLFYNTPARRKFLRTEKTEFSHIDEIIRRIALARFDVTINLSHNGKIVRQYRAVPEGGQKERRLGAICGTAFLEQALAIEWQHGDLTLRGWVADPNHTTPALAEIQYCYVNGRMMRDRLINHAIRQACEDKLGADQQPAFVLYLEIDPHQVDVNVHPAKHEVRFHQSRLVHDFIYQGVLSVLQQQLETPLPLDDEPQPAPRAIPENRVAAGRNHFAEPAAREPVAPRYSPAPASGSRPAAPWPNAQPGYQKQQGEVYRQLLQTPAPMQKPKAPEPQEPALAANSQSFGRVLTIVHSDCALLERDGNISLLSLPVAERWLRQAQLTPGEAPVCAQPLLIPLRLKVSGEEKSALEKAQSALAELGIDFQSDAQHVTIRAVPLPLRQQNLQILIPELIGYLAKQSVFEPGNIAQWIARNLMSEHAQWSMAQAITLLADVERLCPQLVKTPPGGLLQSVDLHPAIKALKDE.

Residues 363–397 (FAEPAAREPVAPRYSPAPASGSRPAAPWPNAQPGY) form a disordered region. Over residues 364–387 (AEPAAREPVAPRYSPAPASGSRPA) the composition is skewed to low complexity.

The protein belongs to the DNA mismatch repair MutL/HexB family.

Its function is as follows. This protein is involved in the repair of mismatches in DNA. It is required for dam-dependent methyl-directed DNA mismatch repair. May act as a 'molecular matchmaker', a protein that promotes the formation of a stable complex between two or more DNA-binding proteins in an ATP-dependent manner without itself being part of a final effector complex. This Shigella flexneri protein is DNA mismatch repair protein MutL.